The chain runs to 384 residues: Lipid-A-disaccharide synthase (384 aa).

The protein belongs to the LpxB family.

The catalysed reaction is a lipid X + a UDP-2-N,3-O-bis[(3R)-3-hydroxyacyl]-alpha-D-glucosamine = a lipid A disaccharide + UDP + H(+). It participates in bacterial outer membrane biogenesis; LPS lipid A biosynthesis. Its function is as follows. Condensation of UDP-2,3-diacylglucosamine and 2,3-diacylglucosamine-1-phosphate to form lipid A disaccharide, a precursor of lipid A, a phosphorylated glycolipid that anchors the lipopolysaccharide to the outer membrane of the cell. This is Lipid-A-disaccharide synthase from Neisseria meningitidis serogroup C / serotype 2a (strain ATCC 700532 / DSM 15464 / FAM18).